The sequence spans 1703 residues: Gingipain R1 (1703 aa).

Residues 1–20 form the signal peptide; that stretch reads MNKFVSIALCSSLLGGMAFA. Positions 21 to 224 are excised as a propeptide; the sequence is QQTELGRNPN…RMFMNYEPGR (204 aa). Residues D302, V324, D327, Y329, E331, E385, and H390 each coordinate Ca(2+). H435 acts as the Proton donor in catalysis. Residue C468 is the Nucleophile of the active site. The Ca(2+) site is built by F473, E482, D516, E517, E520, and H526. The interval 940–968 is disordered; the sequence is WDAPNGTPNPNPNPNPNPNPGTTTLSESF. Pro residues predominate over residues 946–958; the sequence is TPNPNPNPNPNPN.

It belongs to the peptidase C25 family.

Its subcellular location is the secreted. It carries out the reaction Hydrolysis of proteins and small molecule substrates, with a preference for Arg in P1.. In terms of biological role, thiol protease. Acts synergistically with RgpB to catalyze the maturation of fimbrial subunits, such as FimA. Its proteolytic activity is a major factor in both periodontal tissue destruction and in evasion of host defense mechanisms. The chain is Gingipain R1 from Porphyromonas gingivalis (strain ATCC 33277 / DSM 20709 / CIP 103683 / JCM 12257 / NCTC 11834 / 2561).